A 485-amino-acid polypeptide reads, in one-letter code: Aspartyl/glutamyl-tRNA(Asn/Gln) amidotransferase subunit B (485 aa).

The protein belongs to the GatB/GatE family. GatB subfamily. As to quaternary structure, heterotrimer of A, B and C subunits.

The catalysed reaction is L-glutamyl-tRNA(Gln) + L-glutamine + ATP + H2O = L-glutaminyl-tRNA(Gln) + L-glutamate + ADP + phosphate + H(+). It carries out the reaction L-aspartyl-tRNA(Asn) + L-glutamine + ATP + H2O = L-asparaginyl-tRNA(Asn) + L-glutamate + ADP + phosphate + 2 H(+). Allows the formation of correctly charged Asn-tRNA(Asn) or Gln-tRNA(Gln) through the transamidation of misacylated Asp-tRNA(Asn) or Glu-tRNA(Gln) in organisms which lack either or both of asparaginyl-tRNA or glutaminyl-tRNA synthetases. The reaction takes place in the presence of glutamine and ATP through an activated phospho-Asp-tRNA(Asn) or phospho-Glu-tRNA(Gln). The polypeptide is Aspartyl/glutamyl-tRNA(Asn/Gln) amidotransferase subunit B (Anaplasma marginale (strain Florida)).